The chain runs to 407 residues: Imidazolonepropionase (407 aa).

Residues His-68 and His-70 each coordinate Fe(3+). 2 residues coordinate Zn(2+): His-68 and His-70. 4-imidazolone-5-propanoate contacts are provided by Arg-77, Tyr-140, and His-173. Residue Tyr-140 coordinates N-formimidoyl-L-glutamate. His-236 contacts Fe(3+). His-236 is a binding site for Zn(2+). Gln-239 contributes to the 4-imidazolone-5-propanoate binding site. Asp-311 contacts Fe(3+). Asp-311 serves as a coordination point for Zn(2+). Residues Asn-313 and Gly-315 each contribute to the N-formimidoyl-L-glutamate site. Thr-316 contributes to the 4-imidazolone-5-propanoate binding site.

This sequence belongs to the metallo-dependent hydrolases superfamily. HutI family. Requires Zn(2+) as cofactor. Fe(3+) serves as cofactor.

It is found in the cytoplasm. It carries out the reaction 4-imidazolone-5-propanoate + H2O = N-formimidoyl-L-glutamate. It functions in the pathway amino-acid degradation; L-histidine degradation into L-glutamate; N-formimidoyl-L-glutamate from L-histidine: step 3/3. Its function is as follows. Catalyzes the hydrolytic cleavage of the carbon-nitrogen bond in imidazolone-5-propanoate to yield N-formimidoyl-L-glutamate. It is the third step in the universal histidine degradation pathway. The polypeptide is Imidazolonepropionase (Stenotrophomonas maltophilia (strain R551-3)).